The sequence spans 265 residues: Capsule polysaccharide export inner-membrane protein CtrC (265 aa).

6 consecutive transmembrane segments (helical) span residues 37-57 (IGFLWLFVEPLLMTFVIVLMW), 67-84 (TLNIVAFAITGYPMLMMW), 121-141 (IAGATIAQIVIMAVLIAIGWI), 148-168 (FYMLMAWLLMAFFAIGLGLVI), 178-198 (FGKIWGTLTFVMMPLSGAFFF), and 238-258 (WYIVLCNLVLLLFGLAMVSKF). Positions 37-258 (IGFLWLFVEP…LFGLAMVSKF (222 aa)) constitute an ABC transmembrane type-2 domain.

The protein belongs to the ABC-2 integral membrane protein family.

The protein localises to the cell inner membrane. In terms of biological role, may form an ATP-driven capsule polysaccharide export apparatus, in association with the CtrB and CtrD proteins. The chain is Capsule polysaccharide export inner-membrane protein CtrC (ctrC) from Neisseria meningitidis serogroup B (strain ATCC BAA-335 / MC58).